Here is a 109-residue protein sequence, read N- to C-terminus: Thiosulfate sulfurtransferase GlpE (109 aa).

The Rhodanese domain occupies His17–Ala105. Cys65 (cysteine persulfide intermediate) is an active-site residue.

Belongs to the GlpE family.

The protein resides in the cytoplasm. The enzyme catalyses thiosulfate + hydrogen cyanide = thiocyanate + sulfite + 2 H(+). It carries out the reaction thiosulfate + [thioredoxin]-dithiol = [thioredoxin]-disulfide + hydrogen sulfide + sulfite + 2 H(+). Functionally, transferase that catalyzes the transfer of sulfur from thiosulfate to thiophilic acceptors such as cyanide or dithiols. May function in a CysM-independent thiosulfate assimilation pathway by catalyzing the conversion of thiosulfate to sulfite, which can then be used for L-cysteine biosynthesis. The polypeptide is Thiosulfate sulfurtransferase GlpE (Klebsiella pneumoniae subsp. pneumoniae (strain ATCC 700721 / MGH 78578)).